We begin with the raw amino-acid sequence, 436 residues long: Chromosomal replication initiator protein DnaA (436 aa).

The tract at residues 1-69 is domain I, interacts with DnaA modulators; that stretch reads MLADEILELL…AYLYEVKTGK (69 aa). The domain II stretch occupies residues 69 to 99; sequence KKPEVEITSQTKLKNIKQNQVNVKQIKAQSS. The tract at residues 100–314 is domain III, AAA+ region; sequence ILNPGYTFEN…GAIINLNAYA (215 aa). Residues Gly144, Gly146, Lys147, and Thr148 each contribute to the ATP site. Residues 315-436 are domain IV, binds dsDNA; it reads SLMRVEITLE…EIKNKILTKG (122 aa).

This sequence belongs to the DnaA family. As to quaternary structure, oligomerizes as a right-handed, spiral filament on DNA at oriC.

It is found in the cytoplasm. Functionally, plays an essential role in the initiation and regulation of chromosomal replication. ATP-DnaA binds to the origin of replication (oriC) to initiate formation of the DNA replication initiation complex once per cell cycle. Binds the DnaA box (a 9 base pair repeat at the origin) and separates the double-stranded (ds)DNA. Forms a right-handed helical filament on oriC DNA; dsDNA binds to the exterior of the filament while single-stranded (ss)DNA is stabiized in the filament's interior. The ATP-DnaA-oriC complex binds and stabilizes one strand of the AT-rich DNA unwinding element (DUE), permitting loading of DNA polymerase. After initiation quickly degrades to an ADP-DnaA complex that is not apt for DNA replication. Binds acidic phospholipids. This chain is Chromosomal replication initiator protein DnaA, found in Campylobacter concisus (strain 13826).